The sequence spans 136 residues: MLAPKKQKFRKAHKGRVMSKAKAGMTLAFGSFGLKSIDGWRVTARQIEAGRKAATRCMKRQGRLWIRIFPDVPVSKKPAEVRMGKGKGTPEFFAVRVSPGRIMFEIEGVEENIALRALELASAKLPVRTRIVRRYE.

It belongs to the universal ribosomal protein uL16 family. In terms of assembly, part of the 50S ribosomal subunit.

Binds 23S rRNA and is also seen to make contacts with the A and possibly P site tRNAs. The chain is Large ribosomal subunit protein uL16 from Rickettsia prowazekii (strain Madrid E).